The chain runs to 136 residues: MIWKRKITLEALNAMGEGNMVGFLDIRFEHIGDDTLEATMPVDSRTKQPFGLLHGGASVVLAESIGSVAGYLCTEGEQKVVGLEINANHVRSAREGRVRGVCKPLHLGSRHQVWQIEIFDEKGRLCCSSRLTTAIL.

The active-site Nucleophile or proton acceptor is the Glu-63. Residues Gly-82, 89–92 (HVRS), and 106–111 (HLGSRH) contribute to the substrate site.

It belongs to the thioesterase PaaI family. Homotetramer. Dimer of dimers.

It carries out the reaction 1,4-dihydroxy-2-naphthoyl-CoA + H2O = 1,4-dihydroxy-2-naphthoate + CoA + H(+). It functions in the pathway quinol/quinone metabolism; 1,4-dihydroxy-2-naphthoate biosynthesis; 1,4-dihydroxy-2-naphthoate from chorismate: step 7/7. It participates in quinol/quinone metabolism; menaquinone biosynthesis. Catalyzes the hydrolysis of 1,4-dihydroxy-2-naphthoyl-CoA (DHNA-CoA) to 1,4-dihydroxy-2-naphthoate (DHNA). Also shows significant activity toward a wide range of acyl-CoA thioesters, and minimal activity toward benzoyl-holoEntB. In Escherichia coli (strain K12), this protein is 1,4-dihydroxy-2-naphthoyl-CoA hydrolase.